Consider the following 1010-residue polypeptide: Trifunctional purine biosynthetic protein adenosine-3 (1010 aa).

Residue Ala2 is modified to N-acetylalanine. Residues Lys111–Asp318 enclose the ATP-grasp domain. ATP contacts are provided by residues Glu190–Leu193, Glu197, Arg220, and Asn229. Mg(2+) contacts are provided by Glu288 and Asn290. An N6-acetyllysine modification is found at Lys350. The segment at Gly434–Arg809 is AIRS domain. Ser440 carries the phosphoserine modification. Thr682 carries the post-translational modification Phosphothreonine. Position 802 is a phosphoserine (Ser802). The tract at residues Val810–Asp1010 is GART domain. Position 818-820 (Gly818–Asn820) interacts with N(1)-(5-phospho-beta-D-ribosyl)glycinamide. Residues Arg871, Met896 to Leu899, and Asn913 each bind (6R)-10-formyltetrahydrofolate. Catalysis depends on His915, which acts as the Proton donor. Position 947 to 951 (Ala947 to Asp951) interacts with (6R)-10-formyltetrahydrofolate. Lys977–Glu980 lines the N(1)-(5-phospho-beta-D-ribosyl)glycinamide pocket.

The protein in the N-terminal section; belongs to the GARS family. This sequence in the central section; belongs to the AIR synthase family. It in the C-terminal section; belongs to the GART family. As to quaternary structure, homodimer. Requires Mg(2+) as cofactor. The cofactor is Mn(2+).

It catalyses the reaction 5-phospho-beta-D-ribosylamine + glycine + ATP = N(1)-(5-phospho-beta-D-ribosyl)glycinamide + ADP + phosphate + H(+). It carries out the reaction 2-formamido-N(1)-(5-O-phospho-beta-D-ribosyl)acetamidine + ATP = 5-amino-1-(5-phospho-beta-D-ribosyl)imidazole + ADP + phosphate + H(+). The enzyme catalyses N(1)-(5-phospho-beta-D-ribosyl)glycinamide + (6R)-10-formyltetrahydrofolate = N(2)-formyl-N(1)-(5-phospho-beta-D-ribosyl)glycinamide + (6S)-5,6,7,8-tetrahydrofolate + H(+). The protein operates within purine metabolism; IMP biosynthesis via de novo pathway; 5-amino-1-(5-phospho-D-ribosyl)imidazole from N(2)-formyl-N(1)-(5-phospho-D-ribosyl)glycinamide: step 2/2. Its pathway is purine metabolism; IMP biosynthesis via de novo pathway; N(1)-(5-phospho-D-ribosyl)glycinamide from 5-phospho-alpha-D-ribose 1-diphosphate: step 2/2. It functions in the pathway purine metabolism; IMP biosynthesis via de novo pathway; N(2)-formyl-N(1)-(5-phospho-D-ribosyl)glycinamide from N(1)-(5-phospho-D-ribosyl)glycinamide (10-formyl THF route): step 1/1. Its function is as follows. Trifunctional enzyme that catalyzes three distinct reactions as part of the 'de novo' inosine monophosphate biosynthetic pathway. The protein is Trifunctional purine biosynthetic protein adenosine-3 (GART) of Bos taurus (Bovine).